A 177-amino-acid polypeptide reads, in one-letter code: Large ribosomal subunit protein uL6 (177 aa).

The protein belongs to the universal ribosomal protein uL6 family. Part of the 50S ribosomal subunit.

In terms of biological role, this protein binds to the 23S rRNA, and is important in its secondary structure. It is located near the subunit interface in the base of the L7/L12 stalk, and near the tRNA binding site of the peptidyltransferase center. The polypeptide is Large ribosomal subunit protein uL6 (Actinobacillus succinogenes (strain ATCC 55618 / DSM 22257 / CCUG 43843 / 130Z)).